The chain runs to 191 residues: Glutathione-dependent formaldehyde-activating enzyme (191 aa).

One can recognise a CENP-V/GFA domain in the interval 22 to 169 (FQGGTLECHC…LTELGLPPYD (148 aa)). Zn(2+)-binding residues include Cys-29, Cys-31, Cys-50, Cys-52, Cys-55, Cys-97, and Cys-100.

The protein belongs to the Gfa family. It depends on Zn(2+) as a cofactor.

It catalyses the reaction S-(hydroxymethyl)glutathione = glutathione + formaldehyde. The protein operates within one-carbon metabolism; formaldehyde degradation; formate from formaldehyde (glutathione route): step 1/3. Catalyzes the condensation of formaldehyde and glutathione to S-hydroxymethylglutathione. This is Glutathione-dependent formaldehyde-activating enzyme from Xanthomonas axonopodis pv. citri (strain 306).